A 122-amino-acid polypeptide reads, in one-letter code: Probable F-box protein At4g23960 (122 aa).

An F-box domain is found at 1 to 45; sequence MIEQLFPEVTCYALRYLDYSSLCQLSMTSSSMRKTANDDVLWRAL.

In Arabidopsis thaliana (Mouse-ear cress), this protein is Probable F-box protein At4g23960.